The chain runs to 189 residues: 6,7-dimethyl-8-ribityllumazine synthase (189 aa).

5-amino-6-(D-ribitylamino)uracil is bound by residues W31, 65–67 (SFE), and 89–91 (CVI). (2S)-2-hydroxy-3-oxobutyl phosphate is bound at residue 94-95 (ET). H97 serves as the catalytic Proton donor. F122 is a 5-amino-6-(D-ribitylamino)uracil binding site. R136 serves as a coordination point for (2S)-2-hydroxy-3-oxobutyl phosphate.

It belongs to the DMRL synthase family.

It carries out the reaction (2S)-2-hydroxy-3-oxobutyl phosphate + 5-amino-6-(D-ribitylamino)uracil = 6,7-dimethyl-8-(1-D-ribityl)lumazine + phosphate + 2 H2O + H(+). It participates in cofactor biosynthesis; riboflavin biosynthesis; riboflavin from 2-hydroxy-3-oxobutyl phosphate and 5-amino-6-(D-ribitylamino)uracil: step 1/2. Functionally, catalyzes the formation of 6,7-dimethyl-8-ribityllumazine by condensation of 5-amino-6-(D-ribitylamino)uracil with 3,4-dihydroxy-2-butanone 4-phosphate. This is the penultimate step in the biosynthesis of riboflavin. This chain is 6,7-dimethyl-8-ribityllumazine synthase, found in Flavobacterium psychrophilum (strain ATCC 49511 / DSM 21280 / CIP 103535 / JIP02/86).